The sequence spans 355 residues: MGCTVSQEDKAAADRSKMIDKNLREDGEKAAREVKLLLLGAGESGKSTIVKQMKIIHEDGYSEDECKQYRAVVYSNTVQSIMAIIKAMTILHLDYERPEREEDAKRLFKMAAEAEERGDLPEELANIIKDLWADSGIQHCLTRAREYQLNDSAAYYLKDLERISKPDYIPTQQDVLRTRVKTTGIVETHFTFKDLHFKMFDVGGQRSERKKWIHCFEGVTAIIFCVAMSAYDLVLAEDEEMNRMHESMKLFDSICNNKWFTETSIILFLNKKDLFEQKIAHSPLTICFPEYEGPNTYQEAQAYIQTKFEDLNKKKETKEIYTHFTCATDTKNVQFVFDAVTDVIIKNNLKDCGLF.

The N-myristoyl glycine moiety is linked to residue Gly2. The S-palmitoyl cysteine moiety is linked to residue Cys3. The 324-residue stretch at 32–355 (REVKLLLLGA…KNNLKDCGLF (324 aa)) folds into the G-alpha domain. Residues 35–48 (KLLLLGAGESGKST) form a G1 motif region. GTP is bound by residues 40–47 (GAGESGKS), 176–182 (LRTRVKT), 201–205 (DVGGQ), 270–273 (NKKD), and Ala327. Positions 47 and 182 each coordinate Mg(2+). The interval 174–182 (DVLRTRVKT) is G2 motif. The tract at residues 197 to 206 (FKMFDVGGQR) is G3 motif. A G4 motif region spans residues 266 to 273 (ILFLNKKD). A G5 motif region spans residues 325-330 (TCATDT).

This sequence belongs to the G-alpha family. G(i/o/t/z) subfamily. G proteins are composed of 3 units; alpha, beta and gamma. The alpha chain contains the guanine nucleotide binding site.

It is found in the cytoplasm. The protein resides in the cytoskeleton. Its subcellular location is the microtubule organizing center. The protein localises to the centrosome. It localises to the cell membrane. Functionally, guanine nucleotide-binding proteins (G proteins) are involved as modulators or transducers in various transmembrane signaling systems. The G(i) proteins are involved in hormonal regulation of adenylate cyclase: they inhibit the cyclase in response to beta-adrenergic stimuli. May play a role in cell division. The chain is Guanine nucleotide-binding protein G(i) subunit alpha-2 (gnai2) from Oryzias latipes (Japanese rice fish).